The sequence spans 554 residues: Hydroxylamine reductase (554 aa).

[2Fe-2S] cluster is bound by residues C3, C6, C18, and C25. The hybrid [4Fe-2O-2S] cluster site is built by H252, E276, C320, C408, C436, C461, E495, and K497. Residue C408 is modified to Cysteine persulfide.

This sequence belongs to the HCP family. [2Fe-2S] cluster serves as cofactor. The cofactor is hybrid [4Fe-2O-2S] cluster.

The protein resides in the cytoplasm. The enzyme catalyses A + NH4(+) + H2O = hydroxylamine + AH2 + H(+). Functionally, catalyzes the reduction of hydroxylamine to form NH(3) and H(2)O. The chain is Hydroxylamine reductase from Shewanella pealeana (strain ATCC 700345 / ANG-SQ1).